The following is a 122-amino-acid chain: Secretion system apparatus protein SsaM (122 aa).

This is Secretion system apparatus protein SsaM (ssaM) from Salmonella typhimurium (strain LT2 / SGSC1412 / ATCC 700720).